The following is a 362-amino-acid chain: Protein RecA (362 aa).

77–84 (GPESSGKT) contacts ATP.

This sequence belongs to the RecA family.

It localises to the cytoplasm. Its function is as follows. Can catalyze the hydrolysis of ATP in the presence of single-stranded DNA, the ATP-dependent uptake of single-stranded DNA by duplex DNA, and the ATP-dependent hybridization of homologous single-stranded DNAs. It interacts with LexA causing its activation and leading to its autocatalytic cleavage. This is Protein RecA from Nitrobacter winogradskyi (strain ATCC 25391 / DSM 10237 / CIP 104748 / NCIMB 11846 / Nb-255).